A 98-amino-acid polypeptide reads, in one-letter code: MKIAHPAFAGTLESSDLQVRIEPNNDGGIELVLDSTVEQRFGHAIRQVVLHTLDAMQVHDALVTIEDKGALDCVIRARVQAAVMRACDVQNIEWSQLS.

O-(phosphoribosyl dephospho-coenzyme A)serine is present on S14.

It belongs to the CitD family. As to quaternary structure, oligomer with a subunit composition of (alpha,beta,gamma)6.

It localises to the cytoplasm. Functionally, covalent carrier of the coenzyme of citrate lyase. The polypeptide is Citrate lyase acyl carrier protein (Vibrio cholerae serotype O1 (strain ATCC 39541 / Classical Ogawa 395 / O395)).